Consider the following 702-residue polypeptide: Ribosomal RNA large subunit methyltransferase K/L (702 aa).

Residues 43–154 (LIYQSLMWSR…KETASIALDL (112 aa)) enclose the THUMP domain.

Belongs to the methyltransferase superfamily. RlmKL family.

It localises to the cytoplasm. The enzyme catalyses guanosine(2445) in 23S rRNA + S-adenosyl-L-methionine = N(2)-methylguanosine(2445) in 23S rRNA + S-adenosyl-L-homocysteine + H(+). The catalysed reaction is guanosine(2069) in 23S rRNA + S-adenosyl-L-methionine = N(2)-methylguanosine(2069) in 23S rRNA + S-adenosyl-L-homocysteine + H(+). Specifically methylates the guanine in position 2445 (m2G2445) and the guanine in position 2069 (m7G2069) of 23S rRNA. The chain is Ribosomal RNA large subunit methyltransferase K/L from Salmonella agona (strain SL483).